The sequence spans 159 residues: Transcriptional repressor NrdR (159 aa).

Residues 3 to 34 fold into a zinc finger; sequence CPTCQNTDSRVLESRSADTGKSVRRRRECLNC. An ATP-cone domain is found at 49–139; that stretch reads ISVLKKDGSR…VYRKFNGVKD (91 aa).

The protein belongs to the NrdR family. Zn(2+) is required as a cofactor.

Its function is as follows. Negatively regulates transcription of bacterial ribonucleotide reductase nrd genes and operons by binding to NrdR-boxes. The sequence is that of Transcriptional repressor NrdR from Prochlorococcus marinus (strain MIT 9515).